A 249-amino-acid polypeptide reads, in one-letter code: Probable GDP-mannose transporter 2 (249 aa).

Topologically, residues 1–15 (MIYTSSKSLQYLAVP) are lumenal. Residues 16–36 (IYTIFKNLTIILIAYGEVLFF) traverse the membrane as a helical segment. The Cytoplasmic segment spans residues 37–47 (GGKVTSMELTS). Residues 48-68 (FIMMVLSSVVATWGDQQAIAI) form a helical membrane-spanning segment. Residues 69–84 (KASSLEDLDQELVEST) are Lumenal-facing. A helical membrane pass occupies residues 85–105 (IFVLNPGYLWMFTNCISSALF). The Cytoplasmic portion of the chain corresponds to 106 to 122 (VLIMRKRIRLTNFKDYD). A helical membrane pass occupies residues 123–143 (TMFYNNVLALPLLLVFSFIME). Over 144-159 (DWSTKNLSVNLSADSL) the chain is Lumenal. Residues asparagine 149 and asparagine 153 are each glycosylated (N-linked (GlcNAc...) asparagine). A helical membrane pass occupies residues 160 to 180 (AAMVISGLMSVGISYCSGWCV). The Cytoplasmic portion of the chain corresponds to 181–186 (RVTSST). A helical membrane pass occupies residues 187-207 (TYSMVGALNKLPIALAGLVFF). Topologically, residues 208-211 (DAPK) are lumenal. The chain crosses the membrane as a helical span at residues 212–232 (NFLSFFSIFLGFLSGLLYAVA). Residues 233-249 (KQKKIQQQKVLAATLEK) lie on the Cytoplasmic side of the membrane.

This sequence belongs to the TPT transporter family. SLC35D subfamily.

It is found in the golgi apparatus membrane. Its subcellular location is the cytoplasmic vesicle membrane. The protein resides in the endoplasmic reticulum membrane. Functionally, involved in the import of GDP-mannose from the cytoplasm into the Golgi lumen. This Saccharomyces cerevisiae (strain RM11-1a) (Baker's yeast) protein is Probable GDP-mannose transporter 2 (HVG1).